Reading from the N-terminus, the 3707-residue chain is Basement membrane-specific heparan sulfate proteoglycan core protein (3707 aa).

The signal sequence occupies residues 1-21 (MGQRAVGSLLLGLLLHARLLA). 3 O-linked (Xyl...) (heparan sulfate) serine glycosylation sites follow: Ser65, Ser71, and Ser76. In terms of domain architecture, SEA spans 80 to 191 (QMVYFRALVN…WGFKFRRLGT (112 aa)). The N-linked (GlcNAc...) asparagine glycan is linked to Asn89. LDL-receptor class A domains follow at residues 195–234 (FPRVCTETEFACHSYNECVALEYRCDRRPDCRDMSDELNC), 281–319 (GPSACGPQEASCHSGHCIPRDYLCDGQEDCRDGSDELGC), 320–359 (ASPPPCEPNEFACENGHCALKLWRCDGDFDCEDRTDEANC), and 360–403 (SVKQ…EFGC). Disulfide bonds link Cys199–Cys212, Cys206–Cys225, Cys219–Cys234, Cys285–Cys297, Cys292–Cys310, Cys304–Cys319, Cys325–Cys337, Cys332–Cys350, Cys344–Cys359, Cys368–Cys381, Cys375–Cys394, Cys388–Cys403, and Cys428–Cys479. N-linked (GlcNAc...) asparagine glycosylation occurs at Asn358. An Ig-like C2-type 1 domain is found at 404–504 (MPPQVVTPPQ…VLELVPQRGP (101 aa)). The Laminin EGF-like 1; first part domain maps to 521-530 (CFCFGVTNVC). A Laminin IV type A 1 domain is found at 538–730 (DQIRLSFDQP…IHGRAHSVEE (193 aa)). An N-linked (GlcNAc...) asparagine glycan is attached at Asn554. A Laminin EGF-like 1; second part domain is found at 731-763 (CRCPIGYSGLSCESCDAHFTRVPGGPYLGTCSG). 11 disulfides stabilise this stretch: Cys764–Cys773, Cys766–Cys780, Cys783–Cys792, Cys795–Cys811, Cys814–Cys829, Cys816–Cys839, Cys842–Cys851, Cys854–Cys869, Cys879–Cys892, Cys894–Cys903, and Cys906–Cys921. Laminin EGF-like domains follow at residues 764–813 (CNCN…ACRP) and 814–871 (CPCP…KCRP). The Laminin EGF-like 4; truncated domain occupies 879-923 (CDERGSLGTSGETCRCKNNVVGRLCNECSDGSFHLSKQNPDGCLK). One can recognise a Laminin EGF-like 5; first part domain in the interval 924–933 (CFCMGVSRQC). The Laminin IV type A 2 domain maps to 941–1125 (AQVLGASEQP…GQDSAREVEQ (185 aa)). Positions 1126–1158 (CTCPPGYRGPSCQDCDTGYTRVPSGLYLGTCER) constitute a Laminin EGF-like 5; second part domain. Intrachain disulfides connect Cys1159-Cys1168, Cys1161-Cys1175, Cys1178-Cys1187, Cys1190-Cys1206, Cys1209-Cys1224, Cys1211-Cys1234, Cys1237-Cys1246, Cys1249-Cys1263, Cys1275-Cys1287, Cys1277-Cys1293, Cys1295-Cys1304, and Cys1307-Cys1322. 3 consecutive Laminin EGF-like domains span residues 1159 to 1208 (CNCH…DCQP), 1209 to 1265 (CPCY…PCHR), and 1275 to 1324 (CGCD…GCLP). The Laminin EGF-like 9; first part domain occupies 1325–1334 (CFCMGVTQQC). Residues 1344 to 1529 (ISTHFAPGDF…SGPRALEVEE (186 aa)) enclose the Laminin IV type A 3 domain. In terms of domain architecture, Laminin EGF-like 9; second part spans 1530–1562 (CRCPPGYVGLSCQDCAPGYTRTGSGLYLGQCEL). 8 disulfides stabilise this stretch: Cys1563–Cys1572, Cys1565–Cys1579, Cys1582–Cys1591, Cys1594–Cys1610, Cys1613–Cys1628, Cys1615–Cys1638, Cys1641–Cys1650, and Cys1653–Cys1668. Laminin EGF-like domains follow at residues 1563 to 1612 (CECN…DCQP) and 1613 to 1670 (CACP…RCQP). 14 consecutive Ig-like C2-type domains span residues 1677–1771 (EVQI…KPIM), 1772–1865 (VTVE…STAP), 1866–1954 (VASI…GGSG), 1955–2049 (PRVQ…PAPA), 2050–2148 (SPAP…PGVV), 2149–2244 (PPIR…PAPG), 2245–2343 (LAQP…RLRS), 2344–2436 (PVIS…PPTV), 2437–2532 (SVLP…APGT), 2533–2619 (PQVQ…VESP), 2620–2720 (PYAT…GGST), 2721–2809 (PTVQ…ALPS), 2810–2895 (VLIN…LVQA), and 2896–2980 (LPQI…LQVP). Residues 1713–1733 (DGRPLPSSAQQRHQGSELHFP) form a disordered region. Intrachain disulfides connect Cys1792–Cys1839, Cys1886–Cys1932, and Cys1976–Cys2021. The disordered stretch occupies residues 2039–2061 (SPSTNSPPAPASPAPIRIESSSS). Positions 2052 to 2061 (APIRIESSSS) are enriched in low complexity. 3 disulfides stabilise this stretch: Cys2073–Cys2118, Cys2170–Cys2215, and Cys2268–Cys2313. N-linked (GlcNAc...) asparagine glycans are attached at residues Asn2336, Asn2394, and Asn2427. Cys2365 and Cys2413 are joined by a disulfide. Intrachain disulfides connect Cys2456–Cys2506 and Cys2554–Cys2599. An N-linked (GlcNAc...) asparagine glycan is attached at Asn2600. Cys2641 and Cys2686 are oxidised to a cystine. Intrachain disulfides connect Cys2831–Cys2876 and Cys2917–Cys2962. The Laminin G-like 1 domain maps to 2984 to 3162 (IPYFTQTPYS…VNLTTHGISH (179 aa)). N-linked (GlcNAc...) asparagine glycosylation is found at Asn3098 and Asn3154. Cystine bridges form between Cys3137/Cys3163, Cys3166/Cys3177, Cys3171/Cys3187, Cys3204/Cys3216, and Cys3229/Cys3238. An EGF-like domain is found at 3163–3241 (CPTCQDRPCQ…GRSGVRCEEG (79 aa)). In terms of domain architecture, Laminin G-like 2 spans 3245–3425 (TTPSMSGAGS…VGQCYDSSPC (181 aa)). N-linked (GlcNAc...) asparagine glycosylation occurs at Asn3385. Intrachain disulfides connect Cys3393-Cys3419, Cys3425-Cys3436, Cys3430-Cys3446, Cys3448-Cys3457, Cys3464-Cys3476, Cys3470-Cys3481, and Cys3483-Cys3492. A glycan (O-linked (Xyl...) (chondroitin sulfate) serine) is linked at Ser3510. The Laminin G-like 3 domain occupies 3518–3705 (QYGAYFYDNG…AQAGANTRPC (188 aa)). Residues Asp3574 and Leu3591 each contribute to the Ca(2+) site. The segment at 3615-3617 (LRE) is mediates motor neuron attachment. Ca(2+)-binding residues include Ala3641 and Asn3643. Cys3671 and Cys3705 form a disulfide bridge. The disordered stretch occupies residues 3680–3707 (ARPGAPPPQPLDLQHRAQAGANTRPCPS).

Has a strong tendency to aggregate in dimers or stellate structures. Interacts with other basement membrane components such as laminin, prolargin and collagen type IV. Interacts with COL13A1. Interacts with FGFBP1. Interacts with VWA1. Interacts (via C-terminus) with ECM1 (via C-terminus). Interacts with SVEP1. Proteolytic processing produces the C-terminal angiogenic peptide, endorepellin. This peptide can be further processed to produce the LG3 peptide. Post-translationally, O-glycosylated. Contains three heparan sulfate chains. Also contains chondroitin sulfate.

The protein localises to the secreted. The protein resides in the extracellular space. It localises to the extracellular matrix. Its subcellular location is the basement membrane. Functionally, integral component of basement membranes. Component of the glomerular basement membrane (GBM), responsible for the fixed negative electrostatic membrane charge, and which provides a barrier which is both size- and charge-selective. It serves as an attachment substrate for cells. Plays essential roles in vascularization. Critical for normal heart development and for regulating the vascular response to injury. Also required for avascular cartilage development. In terms of biological role, anti-angiogenic and anti-tumor peptide that inhibits endothelial cell migration, collagen-induced endothelial tube morphogenesis and blood vessel growth in the chorioallantoic membrane. Blocks endothelial cell adhesion to fibronectin and type I collagen. Anti-tumor agent in neovascularization. Interaction with its ligand, integrin alpha2/beta1, is required for the anti-angiogenic properties. Evokes a reduction in phosphorylation of receptor tyrosine kinases via alpha2/beta1 integrin-mediated activation of the tyrosine phosphatase, PTPN6. Has anti-angiogenic properties that require binding of calcium ions for full activity. The protein is Basement membrane-specific heparan sulfate proteoglycan core protein (Hspg2) of Mus musculus (Mouse).